We begin with the raw amino-acid sequence, 412 residues long: Multifunctional CCA protein (412 aa).

Positions 8 and 11 each coordinate ATP. Residues glycine 8 and arginine 11 each contribute to the CTP site. Residues aspartate 21 and aspartate 23 each contribute to the Mg(2+) site. Residues arginine 91, arginine 137, and arginine 140 each contribute to the ATP site. Residues arginine 91, arginine 137, and arginine 140 each contribute to the CTP site. The 102-residue stretch at 225–326 (TGIHVMMVID…ADMLQATDAY (102 aa)) folds into the HD domain.

Belongs to the tRNA nucleotidyltransferase/poly(A) polymerase family. Bacterial CCA-adding enzyme type 1 subfamily. Monomer. Can also form homodimers and oligomers. Mg(2+) is required as a cofactor. The cofactor is Ni(2+).

It carries out the reaction a tRNA precursor + 2 CTP + ATP = a tRNA with a 3' CCA end + 3 diphosphate. It catalyses the reaction a tRNA with a 3' CCA end + 2 CTP + ATP = a tRNA with a 3' CCACCA end + 3 diphosphate. Catalyzes the addition and repair of the essential 3'-terminal CCA sequence in tRNAs without using a nucleic acid template. Adds these three nucleotides in the order of C, C, and A to the tRNA nucleotide-73, using CTP and ATP as substrates and producing inorganic pyrophosphate. tRNA 3'-terminal CCA addition is required both for tRNA processing and repair. Also involved in tRNA surveillance by mediating tandem CCA addition to generate a CCACCA at the 3' terminus of unstable tRNAs. While stable tRNAs receive only 3'-terminal CCA, unstable tRNAs are marked with CCACCA and rapidly degraded. This is Multifunctional CCA protein from Nitrosomonas europaea (strain ATCC 19718 / CIP 103999 / KCTC 2705 / NBRC 14298).